Reading from the N-terminus, the 932-residue chain is Potassium voltage-gated channel subfamily KQT member 5 (932 aa).

Residues Met1–Trp125 are Cytoplasmic-facing. Ser88 carries the phosphoserine modification. Residues Ala126 to Phe146 form a helical membrane-spanning segment. Topologically, residues Ser147–Ala156 are extracellular. The chain crosses the membrane as a helical span at residues Ser157–Ile177. Residues Arg178–Lys200 lie on the Cytoplasmic side of the membrane. Residues Pro201–Thr221 form a helical membrane-spanning segment. The Extracellular segment spans residues Gln222 to Ser229. A helical; Voltage-sensor membrane pass occupies residues Ala230–Trp252. Residues Arg248 and Lys264 each contribute to the a 1,2-diacyl-sn-glycero-3-phospho-(1D-myo-inositol-4,5-bisphosphate) site. The Cytoplasmic portion of the chain corresponds to Lys253–Leu266. A helical membrane pass occupies residues Ile267–Val287. The Extracellular segment spans residues Glu288–Tyr298. Positions Ala299 to Pro319 form an intramembrane region, pore-forming. Residues Leu320 to Arg325 lie on the Extracellular side of the membrane. Residues Leu326–Leu346 form a helical membrane-spanning segment. Over Gly347–Lys932 the chain is Cytoplasmic. Lys361 is a binding site for a 1,2-diacyl-sn-glycero-3-phospho-(1D-myo-inositol-4,5-bisphosphate). The interaction with CALM stretch occupies residues Ala370 to Trp378. Residues Ser404–Trp465 are disordered. Residues Arg431–Ala440 are compositionally biased toward polar residues. Position 447 is a phosphoserine (Ser447). Residues Val521 to Met528 form an interaction with CALM region. The tract at residues Ser655 to Arg678 is disordered. Ser831 is subject to Phosphoserine. Positions Val876–Thr885 are enriched in acidic residues. Positions Val876–Glu919 are disordered. Residues Ala888–Ala899 are compositionally biased toward low complexity. Over residues Ser902–Ile914 the composition is skewed to polar residues.

Belongs to the potassium channel family. KQT (TC 1.A.1.15) subfamily. Kv7.5/KCNQ5 sub-subfamily. Homotetramer; forms a functional homotetrameric channel resulting in the expression of a small M-current. Heterotetramer with KCNQ3; forms heterotetrameric M-channel responsible for the native M-current. Heterotetramer with KCNQ1; forms a functional voltage-gated potassium channel. Interacts (via C-terminus) with calmodulin/CALM1; forms a heterooctameric structure (with 4:4 KCNQ1:CALM stoichiometry); the interaction is calcium-independent, constitutive and participates in the channel function. As to expression, strongly expressed in brain and skeletal muscle. In brain, expressed in cerebral cortex, occipital pole, frontal lobe and temporal lobe. Lower levels in hippocampus and putamen. Low to undetectable levels in medulla, cerebellum and thalamus.

Its subcellular location is the cell membrane. The catalysed reaction is K(+)(in) = K(+)(out). Its activity is regulated as follows. Phosphatidylinositol-4,5-bisphosphate (PIP2) is essential to activate KCNQ5 channel by inducing the coupling of the voltage-sensing domain (VSD) and the pore-forming domain (PD). Calcium suppresses KCNQ5 channel current through calcium-bound CALM C-terminus. Therefore CALM acts as calcium sensor that controls channel activity. Activated by niflumic acid and the anticonvulsant retigabine. Inhibited by barium, linopirdine, XE991 and tetraethylammonium (as homomer). Insensitive to tetraethylammonium in KCNQ3-KCNQ5 heteromers. Its function is as follows. Pore-forming subunit of the voltage-gated potassium (Kv) channel broadly expressed in brain and involved in the regulation of neuronal excitability. Associates with KCNQ3/Kv7.3 pore-forming subunit to form a potassium channel which contributes to M-type current, a slowly activating and deactivating potassium conductance which plays a critical role in determining the subthreshold electrical excitability of neurons. Contributes, with other potassium channels, to the molecular diversity of a heterogeneous population of M-channels, varying in kinetic and pharmacological properties, which underlie this physiologically important current. Also forms a functional channel with KCNQ1/Kv7.1 subunit that may contribute to vasoconstriction and hypertension. Channel may be selectively permeable in vitro to other cations besides potassium, in decreasing order of affinity K(+) = Rb(+) &gt; Cs(+) &gt; Na(+). Similar to the native M-channel, KCNQ3-KCNQ5 potassium channel is suppressed by activation of the muscarinic acetylcholine receptor CHRM1. The chain is Potassium voltage-gated channel subfamily KQT member 5 from Homo sapiens (Human).